Consider the following 359-residue polypeptide: ATP-dependent kinase YFH7 (359 aa).

31-39 (GPPGSGKST) contacts ATP.

This sequence belongs to the YFH7 family.

ATP-dependent kinase that could be involved in endoplasmic reticulum membrane assembly. The protein is ATP-dependent kinase YFH7 (YFH7) of Vanderwaltozyma polyspora (strain ATCC 22028 / DSM 70294 / BCRC 21397 / CBS 2163 / NBRC 10782 / NRRL Y-8283 / UCD 57-17) (Kluyveromyces polysporus).